Consider the following 89-residue polypeptide: Small ribosomal subunit protein uS15 (89 aa).

This sequence belongs to the universal ribosomal protein uS15 family. Part of the 30S ribosomal subunit. Forms a bridge to the 50S subunit in the 70S ribosome, contacting the 23S rRNA.

In terms of biological role, one of the primary rRNA binding proteins, it binds directly to 16S rRNA where it helps nucleate assembly of the platform of the 30S subunit by binding and bridging several RNA helices of the 16S rRNA. Forms an intersubunit bridge (bridge B4) with the 23S rRNA of the 50S subunit in the ribosome. This Burkholderia mallei (strain NCTC 10247) protein is Small ribosomal subunit protein uS15.